A 772-amino-acid polypeptide reads, in one-letter code: 5-methyltetrahydropteroyltriglutamate--homocysteine methyltransferase (772 aa).

Residues 24–27 (RELK) and Lys120 contribute to the 5-methyltetrahydropteroyltri-L-glutamate site. L-homocysteine contacts are provided by residues 446 to 448 (IGS) and Glu499. L-methionine contacts are provided by residues 446 to 448 (IGS) and Glu499. Residue Trp576 participates in 5-methyltetrahydropteroyltri-L-glutamate binding. Position 614 (Asp614) interacts with L-homocysteine. Asp614 contributes to the L-methionine binding site. Residue Glu620 participates in 5-methyltetrahydropteroyltri-L-glutamate binding. Positions 656, 658, and 680 each coordinate Zn(2+). The active-site Proton donor is His709. Position 741 (Cys741) interacts with Zn(2+).

It belongs to the vitamin-B12 independent methionine synthase family. Requires Zn(2+) as cofactor.

The enzyme catalyses 5-methyltetrahydropteroyltri-L-glutamate + L-homocysteine = tetrahydropteroyltri-L-glutamate + L-methionine. Its pathway is amino-acid biosynthesis; L-methionine biosynthesis via de novo pathway; L-methionine from L-homocysteine (MetE route): step 1/1. In terms of biological role, catalyzes the transfer of a methyl group from 5-methyltetrahydrofolate to homocysteine resulting in methionine formation. This chain is 5-methyltetrahydropteroyltriglutamate--homocysteine methyltransferase, found in Streptomyces coelicolor (strain ATCC BAA-471 / A3(2) / M145).